The following is a 125-amino-acid chain: Large ribosomal subunit protein uL24 (125 aa).

The protein belongs to the universal ribosomal protein uL24 family. In terms of assembly, part of the 50S ribosomal subunit.

One of two assembly initiator proteins, it binds directly to the 5'-end of the 23S rRNA, where it nucleates assembly of the 50S subunit. Its function is as follows. One of the proteins that surrounds the polypeptide exit tunnel on the outside of the subunit. In Mycoplasma mobile (strain ATCC 43663 / 163K / NCTC 11711) (Mesomycoplasma mobile), this protein is Large ribosomal subunit protein uL24.